The primary structure comprises 354 residues: NADH-quinone oxidoreductase subunit H (354 aa).

8 consecutive transmembrane segments (helical) span residues 22–42 (ILIR…YLIL), 91–111 (YLIA…VIPF), 124–144 (LLYV…AGWA), 168–188 (MGFA…SAIV), 203–223 (VLSW…ISGV), 255–275 (LFFL…ALLF), 291–311 (IPGF…FIWI), and 326–346 (LGWK…AIWI).

This sequence belongs to the complex I subunit 1 family. As to quaternary structure, NDH-1 is composed of 14 different subunits. Subunits NuoA, H, J, K, L, M, N constitute the membrane sector of the complex.

The protein resides in the cell inner membrane. The catalysed reaction is a quinone + NADH + 5 H(+)(in) = a quinol + NAD(+) + 4 H(+)(out). Its function is as follows. NDH-1 shuttles electrons from NADH, via FMN and iron-sulfur (Fe-S) centers, to quinones in the respiratory chain. The immediate electron acceptor for the enzyme in this species is believed to be ubiquinone. Couples the redox reaction to proton translocation (for every two electrons transferred, four hydrogen ions are translocated across the cytoplasmic membrane), and thus conserves the redox energy in a proton gradient. This subunit may bind ubiquinone. This chain is NADH-quinone oxidoreductase subunit H, found in Cupriavidus pinatubonensis (strain JMP 134 / LMG 1197) (Cupriavidus necator (strain JMP 134)).